We begin with the raw amino-acid sequence, 100 residues long: Small ribosomal subunit protein uS14c (100 aa).

It belongs to the universal ribosomal protein uS14 family. As to quaternary structure, part of the 30S ribosomal subunit.

The protein localises to the plastid. The protein resides in the chloroplast. Functionally, binds 16S rRNA, required for the assembly of 30S particles. The sequence is that of Small ribosomal subunit protein uS14c from Guillardia theta (Cryptophyte).